The following is a 206-amino-acid chain: Small ribosomal subunit protein uS4 (206 aa).

In terms of domain architecture, S4 RNA-binding spans 93–156 (CRLDNLVYRL…RKIKIIAEAL (64 aa)).

This sequence belongs to the universal ribosomal protein uS4 family. As to quaternary structure, part of the 30S ribosomal subunit. Contacts protein S5. The interaction surface between S4 and S5 is involved in control of translational fidelity.

Its function is as follows. One of the primary rRNA binding proteins, it binds directly to 16S rRNA where it nucleates assembly of the body of the 30S subunit. Functionally, with S5 and S12 plays an important role in translational accuracy. The chain is Small ribosomal subunit protein uS4 from Protochlamydia amoebophila (strain UWE25).